Reading from the N-terminus, the 555-residue chain is Protein NRT1/ PTR FAMILY 2.1 (555 aa).

A run of 12 helical transmembrane segments spans residues 32 to 52 (TLLGISVTSYGWVLNLIVFLI), 68 to 88 (IVNGCLSMLPVVTAILADSFF), 91 to 111 (IPVISASAFISLLGIFLLTLI), 127 to 147 (ILCQSPSKLHLGVLYAALALV), 175 to 195 (FFNWYFLTVNTGAIISATAIV), 205 to 225 (LGFGLCAAANLISFIVFISGK), 324 to 344 (VLPLWLAILFVGTSIGVQASM), 369 to 389 (VIVLISSCVFLVLNNWTIYPI), 401 to 421 (LQQVGIGQVFNILSMAISAIV), 437 to 457 (VLWLLPPLVIVGIGDAFHYMA), 476 to 496 (SVTSVAFGISFYLSTALINLI), and 517 to 537 (WVLVIGGVLNLGYFFVCSWYF).

The protein belongs to the major facilitator superfamily. Proton-dependent oligopeptide transporter (POT/PTR) (TC 2.A.17) family. In terms of tissue distribution, expressed in roots.

It is found in the membrane. In terms of biological role, transporter involved in a passive nitrate efflux. This chain is Protein NRT1/ PTR FAMILY 2.1 (NPF2.1), found in Arabidopsis thaliana (Mouse-ear cress).